The primary structure comprises 344 residues: Heat-inducible transcription repressor HrcA (344 aa).

This sequence belongs to the HrcA family.

Its function is as follows. Negative regulator of class I heat shock genes (grpE-dnaK-dnaJ and groELS operons). Prevents heat-shock induction of these operons. In Anoxybacillus flavithermus (strain DSM 21510 / WK1), this protein is Heat-inducible transcription repressor HrcA.